The sequence spans 151 residues: SsrA-binding protein (151 aa).

It belongs to the SmpB family.

It localises to the cytoplasm. Functionally, required for rescue of stalled ribosomes mediated by trans-translation. Binds to transfer-messenger RNA (tmRNA), required for stable association of tmRNA with ribosomes. tmRNA and SmpB together mimic tRNA shape, replacing the anticodon stem-loop with SmpB. tmRNA is encoded by the ssrA gene; the 2 termini fold to resemble tRNA(Ala) and it encodes a 'tag peptide', a short internal open reading frame. During trans-translation Ala-aminoacylated tmRNA acts like a tRNA, entering the A-site of stalled ribosomes, displacing the stalled mRNA. The ribosome then switches to translate the ORF on the tmRNA; the nascent peptide is terminated with the 'tag peptide' encoded by the tmRNA and targeted for degradation. The ribosome is freed to recommence translation, which seems to be the essential function of trans-translation. The chain is SsrA-binding protein from Chlamydia muridarum (strain MoPn / Nigg).